A 79-amino-acid polypeptide reads, in one-letter code: Probable [Fe-S]-dependent transcriptional repressor (79 aa).

Iron-sulfur cluster contacts are provided by cysteine 54, cysteine 59, cysteine 62, and cysteine 68.

This sequence belongs to the FeoC family.

In terms of biological role, may function as a transcriptional regulator that controls feoABC expression. This Photorhabdus laumondii subsp. laumondii (strain DSM 15139 / CIP 105565 / TT01) (Photorhabdus luminescens subsp. laumondii) protein is Probable [Fe-S]-dependent transcriptional repressor.